The following is a 247-amino-acid chain: Pyrroloquinoline-quinone synthase (247 aa).

Belongs to the PqqC family.

The enzyme catalyses 6-(2-amino-2-carboxyethyl)-7,8-dioxo-1,2,3,4,7,8-hexahydroquinoline-2,4-dicarboxylate + 3 O2 = pyrroloquinoline quinone + 2 H2O2 + 2 H2O + H(+). Its pathway is cofactor biosynthesis; pyrroloquinoline quinone biosynthesis. In terms of biological role, ring cyclization and eight-electron oxidation of 3a-(2-amino-2-carboxyethyl)-4,5-dioxo-4,5,6,7,8,9-hexahydroquinoline-7,9-dicarboxylic-acid to PQQ. The chain is Pyrroloquinoline-quinone synthase from Rhizobium rhizogenes (strain K84 / ATCC BAA-868) (Agrobacterium radiobacter).